The chain runs to 271 residues: Membrane protein insertase YidC 1 (271 aa).

An N-terminal signal peptide occupies residues 1 to 20 (MKKKLKTFSLILLTGSLLVA). C21 carries N-palmitoyl cysteine lipidation. Residue C21 is the site of S-diacylglycerol cysteine attachment. The next 4 helical transmembrane spans lie at 45-65 (IQWL…TLII), 124-144 (YASV…FQAL), 163-183 (PDPY…STWL), and 201-221 (VMPF…VLYW).

The protein belongs to the OXA1/ALB3/YidC family. Type 2 subfamily.

It is found in the cell membrane. In terms of biological role, required for the insertion and/or proper folding and/or complex formation of integral membrane proteins into the membrane. Involved in integration of membrane proteins that insert both dependently and independently of the Sec translocase complex, as well as at least some lipoproteins. This chain is Membrane protein insertase YidC 1, found in Streptococcus agalactiae serotype III (strain NEM316).